Here is a 658-residue protein sequence, read N- to C-terminus: MKLYCLSGHPTLPCNVLKFKSTTIMLDCGLDMTSTLNFLPLPLVQSPRLSNLPGWSLKDGNAFLDKELKECSGHVFVDSVPEFCLPETELIDLSTVDVILISNYHCMMALPYITEHTGFTGTVYATEPTVQIGRLLMEELVNFIERVPKAQSASLWKNKDIQRLLPSPLKDAVEVSTWRRCYTMQEVNSALSKIQLVGYSQKIELFGAVQVTPLSSGYALGSSNWIIQSHYEKVSYVSGSSLLTTHPQPMDQASLKNSDVLVLTGLTQIPTANPDGMVGEFCSNLALTVRNGGNVLVPCYPSGVIYDLLECLYQYIDSAGLSSVPLYFISPVANSSLEFSQIFAEWLCHNKQSKVYLPEPPFPHAELIQTNKLKHYPSIHGDFSNDFRQPCVVFTGHPSLRFGDVVHFMELWGKSSLNTVIFTEPDFSYLEALAPYQPLAMKCIYCPIDTRLNFIQVSKLLKEVQPLHVVCPEQYTQPPPAQSHRMDLMIDCQPPAMSYRRAEVLALPFKRRYEKIEIMPELADSLVPMEIKPGISLATVSAVLHTKDNKHLLQPPPRPAQPTSGKKRKRVSDDVPDCKVLKPLLSGSIPVEQFVQTLEKHGFSDIKVEDTAKGHIVLLQEAETLIQIEEDSTHIICDNDEMLRVRLRDLVLKFLQKF.

Residues K2 and F19 each coordinate 1D-myo-inositol hexakisphosphate. K58 participates in a covalent cross-link: Glycyl lysine isopeptide (Lys-Gly) (interchain with G-Cter in SUMO2). K510 and R511 together coordinate 1D-myo-inositol hexakisphosphate. A disordered region spans residues 548-574 (DNKHLLQPPPRPAQPTSGKKRKRVSDD). The Nuclear localization signal signature appears at 566-570 (KKRKR).

Belongs to the metallo-beta-lactamase superfamily. RNA-metabolizing metallo-beta-lactamase-like family. INTS9 subfamily. Component of the Integrator complex, composed of core subunits INTS1, INTS2, INTS3, INTS4, INTS5, INTS6, INTS7, INTS8, INTS9/RC74, INTS10, INTS11/CPSF3L, INTS12, INTS13, INTS14 and INTS15. The core complex associates with protein phosphatase 2A subunits PPP2CA and PPP2R1A, to form the Integrator-PP2A (INTAC) complex. INTS9 is part of the RNA endonuclease subcomplex, composed of INTS4, INTS9, INTS11 and inositol hexakisphosphate (InsP6). Interacts with WDR73; interaction is required for the assembly of the RNA endonuclease subcomplex in the cytoplasm. Interacts with BRAT1; interaction is required for the assembly of the RNA endonuclease subcomplex. Interacts with ESRRB, ESRRB is not a core component of the Integrator complex and this association is a bridge for the interaction with the multiprotein complex Integrator; attracts the transcriptional machinery.

The protein localises to the nucleus. Its subcellular location is the cytoplasm. Its function is as follows. Component of the integrator complex, a multiprotein complex that terminates RNA polymerase II (Pol II) transcription in the promoter-proximal region of genes. The integrator complex provides a quality checkpoint during transcription elongation by driving premature transcription termination of transcripts that are unfavorably configured for transcriptional elongation: the complex terminates transcription by (1) catalyzing dephosphorylation of the C-terminal domain (CTD) of Pol II subunit POLR2A/RPB1 and SUPT5H/SPT5, (2) degrading the exiting nascent RNA transcript via endonuclease activity and (3) promoting the release of Pol II from bound DNA. The integrator complex is also involved in terminating the synthesis of non-coding Pol II transcripts, such as enhancer RNAs (eRNAs), small nuclear RNAs (snRNAs), telomerase RNAs and long non-coding RNAs (lncRNAs). Mediates recruitment of cytoplasmic dynein to the nuclear envelope, probably as component of the integrator complex. This chain is Integrator complex subunit 9, found in Homo sapiens (Human).